A 198-amino-acid polypeptide reads, in one-letter code: E3 ubiquitin-protein ligase rnf152 (198 aa).

The segment at 12 to 55 adopts an RING-type zinc-finger fold; it reads CQICFNYFSQRRLPKLLHCQHTCCSVCLSQMRLSQREIRCPWCR. The chain crosses the membrane as a helical span at residues 162-182; that stretch reads TGVCTVLLVAFILIFLLGIVL.

It belongs to the RNF152 family.

It is found in the lysosome membrane. It carries out the reaction S-ubiquitinyl-[E2 ubiquitin-conjugating enzyme]-L-cysteine + [acceptor protein]-L-lysine = [E2 ubiquitin-conjugating enzyme]-L-cysteine + N(6)-ubiquitinyl-[acceptor protein]-L-lysine.. The protein operates within protein modification; protein ubiquitination. E3 ubiquitin-protein ligase that acts as a negative regulator of mTORC1 signaling by mediating ubiquitination of RagA/RRAGA and RHEB. Catalyzes 'Lys-63'-linked polyubiquitination of RagA/RRAGA in response to amino acid starvation, thereby regulating mTORC1 signaling. Also mediates monoubiquitination of RHEB, promoting its association with the TSC-TBC complex and subsequent inhibition. Also mediates 'Lys-48'-linked polyubiquitination of target proteins and their subsequent targeting to the proteasome for degradation. The polypeptide is E3 ubiquitin-protein ligase rnf152 (Danio rerio (Zebrafish)).